Reading from the N-terminus, the 45-residue chain is Large ribosomal subunit protein bL34 (45 aa).

Belongs to the bacterial ribosomal protein bL34 family.

This Clavibacter michiganensis subsp. michiganensis (strain NCPPB 382) protein is Large ribosomal subunit protein bL34.